Consider the following 56-residue polypeptide: NNKCDIEFATSECEMRYQDCGEASSCTALIEECKTSLQEECNQASSDESSTTVRPE.

Cystine bridges form between C4/C41, C13/C33, and C20/C26.

As to expression, produced by the albumen gland of the egg cordons.

It localises to the secreted. Its function is as follows. Water-borne pheromone that attract the marine mollusk Aplysia into breeding aggregations and coordinate male and female reproductive behavior within the aggregation. The sequence is that of Attractin (ATT) from Aplysia vaccaria (California black sea hare).